The sequence spans 214 residues: Acyl-homoserine-lactone synthase (214 aa).

This sequence belongs to the autoinducer synthase family.

The catalysed reaction is a fatty acyl-[ACP] + S-adenosyl-L-methionine = an N-acyl-L-homoserine lactone + S-methyl-5'-thioadenosine + holo-[ACP] + H(+). Functionally, required for the synthesis of autoinducer molecules such as OHHL (N-(3-oxohexanoyl)-L-homoserine lactone), and HHL (N-hexanoyl-L-homoserine lactone). This chain is Acyl-homoserine-lactone synthase (yenI), found in Yersinia enterocolitica.